The primary structure comprises 149 residues: Nucleoside diphosphate kinase (149 aa).

The ATP site is built by Lys9, Phe57, Arg85, Thr91, Arg102, and Asn112. Catalysis depends on His115, which acts as the Pros-phosphohistidine intermediate.

This sequence belongs to the NDK family. In terms of assembly, homotetramer. Requires Mg(2+) as cofactor.

Its subcellular location is the cytoplasm. It catalyses the reaction a 2'-deoxyribonucleoside 5'-diphosphate + ATP = a 2'-deoxyribonucleoside 5'-triphosphate + ADP. The catalysed reaction is a ribonucleoside 5'-diphosphate + ATP = a ribonucleoside 5'-triphosphate + ADP. Major role in the synthesis of nucleoside triphosphates other than ATP. The ATP gamma phosphate is transferred to the NDP beta phosphate via a ping-pong mechanism, using a phosphorylated active-site intermediate. This chain is Nucleoside diphosphate kinase, found in Staphylococcus aureus (strain Mu3 / ATCC 700698).